We begin with the raw amino-acid sequence, 437 residues long: Amino-acid acetyltransferase (437 aa).

An N-acetyltransferase domain is found at 289-429; the sequence is ENIRLATSFD…EHYNYQRMSK (141 aa).

It belongs to the acetyltransferase family. ArgA subfamily.

It is found in the cytoplasm. The catalysed reaction is L-glutamate + acetyl-CoA = N-acetyl-L-glutamate + CoA + H(+). It functions in the pathway amino-acid biosynthesis; L-arginine biosynthesis; N(2)-acetyl-L-ornithine from L-glutamate: step 1/4. The protein is Amino-acid acetyltransferase of Actinobacillus pleuropneumoniae serotype 5b (strain L20).